A 61-amino-acid chain; its full sequence is uncharacterized protein (61 aa).

A helical membrane pass occupies residues R10–P27.

Its subcellular location is the membrane. This is an uncharacterized protein from Dictyostelium discoideum (Social amoeba).